Reading from the N-terminus, the 255-residue chain is 5'-nucleotidase SurE (255 aa).

A divalent metal cation-binding residues include Asp-16, Asp-17, Ser-47, and Asn-100.

It belongs to the SurE nucleotidase family. It depends on a divalent metal cation as a cofactor.

It localises to the cytoplasm. It carries out the reaction a ribonucleoside 5'-phosphate + H2O = a ribonucleoside + phosphate. Functionally, nucleotidase that shows phosphatase activity on nucleoside 5'-monophosphates. This Vibrio vulnificus (strain YJ016) protein is 5'-nucleotidase SurE.